We begin with the raw amino-acid sequence, 359 residues long: Biotin synthase (359 aa).

Positions 67–302 (CCGNRVDLCS…QQILRYAGGR (236 aa)) constitute a Radical SAM core domain. [4Fe-4S] cluster contacts are provided by Cys85, Cys89, and Cys92. 4 residues coordinate [2Fe-2S] cluster: Cys130, Cys167, Cys227, and Arg297.

The protein belongs to the radical SAM superfamily. Biotin synthase family. As to quaternary structure, homodimer. Requires [4Fe-4S] cluster as cofactor. The cofactor is [2Fe-2S] cluster.

The catalysed reaction is (4R,5S)-dethiobiotin + (sulfur carrier)-SH + 2 reduced [2Fe-2S]-[ferredoxin] + 2 S-adenosyl-L-methionine = (sulfur carrier)-H + biotin + 2 5'-deoxyadenosine + 2 L-methionine + 2 oxidized [2Fe-2S]-[ferredoxin]. It participates in cofactor biosynthesis; biotin biosynthesis; biotin from 7,8-diaminononanoate: step 2/2. Catalyzes the conversion of dethiobiotin (DTB) to biotin by the insertion of a sulfur atom into dethiobiotin via a radical-based mechanism. This Gloeothece citriformis (strain PCC 7424) (Cyanothece sp. (strain PCC 7424)) protein is Biotin synthase.